The sequence spans 155 residues: Ribonuclease H (155 aa).

The RNase H type-1 domain occupies 4 to 145 (QQKVVEIYTD…ADALARKAIA (142 aa)). Asp13, Glu51, Asp73, and Asp137 together coordinate Mg(2+).

It belongs to the RNase H family. In terms of assembly, monomer. Mg(2+) serves as cofactor.

The protein resides in the cytoplasm. It catalyses the reaction Endonucleolytic cleavage to 5'-phosphomonoester.. Its function is as follows. Endonuclease that specifically degrades the RNA of RNA-DNA hybrids. This Bartonella tribocorum (strain CIP 105476 / IBS 506) protein is Ribonuclease H.